The primary structure comprises 613 residues: MSLAALGVVFGDIGTSPLYAIRECFHGEFSIPVNTPNVLGVLSLLIWALLLIVTLKYLTFIMKADNEGEGGILALTALIISHSKKNKSERWILVSLGLFGAALLYGDGMITPSISVLSAVEGIQIIAPSFGPLVIPVTIAILAGLFLFQHHGTAKVGSFFGPIILLWFTSIGLCGLVEIVKYPAILKAVFPWYGLEFLVNNHAKGFLVLGAVFLAVTGAEALYADMGHFGRRPIRLTWSLLVLPALLLNYFGQGAVLLSEPAKSWNPFYALVPSWGIIPMVILATLATIIASQALITGIFSLTQQGIQLGYIPRLTVQHTSASHIGQIYVPAANWALMFSTIALVAGFGSSSKLASAYGVAVTATMLISAVLFYYVARDLWNWNRLGLNLLMGMFMLIDLSFFGASVSKLFHGAWFPLVIGFALFTLMLTWKQGRLLLMKQIQDRTLTVSEFTESLAIQQPQRVKGQAIYLTANPDVVPMALLHNMRHNKILHSEVGLLHFSTERVPRVPNSKKVEVIQLNYGMYKIIARYGFMEYPNIRQVLALANQQGMHFRTDAISYFINREKIVTGMKSKMSVWRKKLFALMARNALSATAYYDLPSGQVIEIGVQVQI.

11 helical membrane-spanning segments follow: residues 38-58 (VLGV…LKYL), 91-111 (WILV…GMIT), 128-148 (PSFG…LFLF), 159-179 (FFGP…LVEI), 206-226 (FLVL…YADM), 238-258 (WSLL…AVLL), 270-290 (ALVP…ATII), 328-348 (IYVP…VAGF), 357-377 (AYGV…YYVA), 387-407 (GLNL…GASV), and 410-430 (LFHG…LMLT).

This sequence belongs to the HAK/KUP transporter (TC 2.A.72) family.

It localises to the cell inner membrane. The enzyme catalyses K(+)(in) + H(+)(in) = K(+)(out) + H(+)(out). In terms of biological role, transport of potassium into the cell. Likely operates as a K(+):H(+) symporter. This Chlorobaculum tepidum (strain ATCC 49652 / DSM 12025 / NBRC 103806 / TLS) (Chlorobium tepidum) protein is Probable potassium transport system protein Kup.